We begin with the raw amino-acid sequence, 298 residues long: Aspartate carbamoyltransferase catalytic subunit (298 aa).

Residues Arg-53 and Thr-54 each contribute to the carbamoyl phosphate site. Lys-81 lines the L-aspartate pocket. The carbamoyl phosphate site is built by Arg-103, His-132, and Gln-135. 2 residues coordinate L-aspartate: Arg-166 and Arg-218. 2 residues coordinate carbamoyl phosphate: Gly-259 and Pro-260.

It belongs to the aspartate/ornithine carbamoyltransferase superfamily. ATCase family. As to quaternary structure, heterododecamer (2C3:3R2) of six catalytic PyrB chains organized as two trimers (C3), and six regulatory PyrI chains organized as three dimers (R2).

The catalysed reaction is carbamoyl phosphate + L-aspartate = N-carbamoyl-L-aspartate + phosphate + H(+). The protein operates within pyrimidine metabolism; UMP biosynthesis via de novo pathway; (S)-dihydroorotate from bicarbonate: step 2/3. Its function is as follows. Catalyzes the condensation of carbamoyl phosphate and aspartate to form carbamoyl aspartate and inorganic phosphate, the committed step in the de novo pyrimidine nucleotide biosynthesis pathway. The protein is Aspartate carbamoyltransferase catalytic subunit of Anaplasma marginale (strain St. Maries).